The chain runs to 543 residues: Methionine--tRNA ligase (543 aa).

The 'HIGH' region motif lies at 13-23 (PYANGPLHVGH). Zn(2+) contacts are provided by C145, C148, C158, and C161. The short motif at 334–338 (QFSKS) is the 'KMSKS' region element. Residue K337 participates in ATP binding.

Belongs to the class-I aminoacyl-tRNA synthetase family. MetG type 1 subfamily. Zn(2+) serves as cofactor.

The protein resides in the cytoplasm. It catalyses the reaction tRNA(Met) + L-methionine + ATP = L-methionyl-tRNA(Met) + AMP + diphosphate. Functionally, is required not only for elongation of protein synthesis but also for the initiation of all mRNA translation through initiator tRNA(fMet) aminoacylation. The protein is Methionine--tRNA ligase of Thermoplasma volcanium (strain ATCC 51530 / DSM 4299 / JCM 9571 / NBRC 15438 / GSS1).